Reading from the N-terminus, the 376-residue chain is Alanine racemase (376 aa).

Lys-36 (proton acceptor; specific for D-alanine) is an active-site residue. At Lys-36 the chain carries N6-(pyridoxal phosphate)lysine. Residue Arg-134 participates in substrate binding. Tyr-266 serves as the catalytic Proton acceptor; specific for L-alanine. Met-314 is a binding site for substrate.

It belongs to the alanine racemase family. The cofactor is pyridoxal 5'-phosphate.

It carries out the reaction L-alanine = D-alanine. It participates in amino-acid biosynthesis; D-alanine biosynthesis; D-alanine from L-alanine: step 1/1. In terms of biological role, catalyzes the interconversion of L-alanine and D-alanine. May also act on other amino acids. The sequence is that of Alanine racemase (alr) from Nitratidesulfovibrio vulgaris (strain ATCC 29579 / DSM 644 / CCUG 34227 / NCIMB 8303 / VKM B-1760 / Hildenborough) (Desulfovibrio vulgaris).